The following is a 398-amino-acid chain: FK506-binding protein 4 (398 aa).

3 disordered regions span residues glutamate 66–glutamate 120, valine 164–lysine 232, and aspartate 245–lysine 288. The span at glutamate 170 to glutamate 228 shows a compositional bias: acidic residues. The span at proline 264–asparagine 287 shows a compositional bias: basic and acidic residues. The PPIase FKBP-type domain occupies glycine 312–lysine 398.

Belongs to the FKBP-type PPIase family. FKBP3/4 subfamily. Binds to histones H3 and H4.

It is found in the nucleus. The enzyme catalyses [protein]-peptidylproline (omega=180) = [protein]-peptidylproline (omega=0). Its activity is regulated as follows. Inhibited by both FK506 and rapamycin. Functionally, PPIase that acts as a histone chaperone. Histone proline isomerase that increases the rate of cis-trans isomerization at prolines on the histone H3 N-terminal tail. Proline isomerization influences H3 methylation thereby regulating gene expression. This chain is FK506-binding protein 4 (FPR4), found in Candida glabrata (strain ATCC 2001 / BCRC 20586 / JCM 3761 / NBRC 0622 / NRRL Y-65 / CBS 138) (Yeast).